The sequence spans 540 residues: Mitochondrial distribution and morphology protein 34 (540 aa).

The SMP-LTD domain occupies 1–208 (MSFKFNSGTF…LPSVIFNMSQ (208 aa)). Disordered stretches follow at residues 26 to 51 (ALNP…KKPK) and 379 to 399 (RSKS…SGSL). Residues 35 to 44 (PESTSGQDGS) are compositionally biased toward polar residues.

This sequence belongs to the MDM34 family. As to quaternary structure, component of the ER-mitochondria encounter structure (ERMES) or MDM complex, composed of MMM1, MDM10, MDM12 and MDM34.

The protein resides in the mitochondrion outer membrane. Functionally, component of the ERMES/MDM complex, which serves as a molecular tether to connect the endoplasmic reticulum (ER) and mitochondria. Components of this complex are involved in the control of mitochondrial shape and protein biogenesis, and function in nonvesicular lipid trafficking between the ER and mitochondria. MDM34 is required for the interaction of the ER-resident membrane protein MMM1 and the outer mitochondrial membrane-resident beta-barrel protein MDM10. The protein is Mitochondrial distribution and morphology protein 34 of Kluyveromyces lactis (strain ATCC 8585 / CBS 2359 / DSM 70799 / NBRC 1267 / NRRL Y-1140 / WM37) (Yeast).